The sequence spans 138 residues: Ribosome maturation factor RimP (138 aa).

The protein belongs to the RimP family.

Its subcellular location is the cytoplasm. Required for maturation of 30S ribosomal subunits. The protein is Ribosome maturation factor RimP of Campylobacter curvus (strain 525.92).